The sequence spans 1349 residues: MLNRENKTAITRKGMVSNRLNKFSIRKYTVGTASILVGTTLIFGLGNQEAKAAESTNKELNEATTSASDNQSSDKVDMQQLNQEDNTKNDNQKEMVSSQGNETTSNGNKLIEKESVQSTTGNKVEVSTAKSDEQASPKSTNEDLNTKQTISNQEALQPDLQENKSVVNVQPTNEENKKVDAKTESTTLNVKSDAIKSNDETLVDNNSNSNNENNADIILPKSTAPKRLNTRMRIAAVQPSSTEAKNVNDLITSNTTLTVVDADKNNKIVPAQDYLSLKSQITVDDKVKSGDYFTIKYSDTVQVYGLNPEDIKNIGDIKDPNNGETIATAKHDTANNLITYTFTDYVDRFNSVQMGINYSIYMDADTIPVSKNDVEFNVTIGNTTTKTTANIQYPDYVVNEKNSIGSAFTETVSHVGNKENPGYYKQTIYVNPSENSLTNAKLKVQAYHSSYPNNIGQINKDVTDIKIYQVPKGYTLNKGYDVNTKELTDVTNQYLQKITYGDNNSAVIDFGNADSAYVVMVNTKFQYTNSESPTLVQMATLSSTGNKSVSTGNALGFTNNQSGGAGQEVYKIGNYVWEDTNKNGVQELGEKGVGNVTVTVFDNNTNTKVGEAVTKEDGSYLIPNLPNGDYRVEFSNLPKGYEVTPSKQGNNEELDSNGLSSVITVNGKDNLSADLGIYKPKYNLGDYVWEDTNKNGIQDQDEKGISGVTVTLKDENGNVLKTVTTDADGKYKFTDLDNGNYKVEFTTPEGYTPTTVTSGSDIEKDSNGLTTTGVINGADNMTLDSGFYKTPKYNLGNYVWEDTNKDGKQDSTEKGISGVTVTLKNENGEVLQTTKTDKDGKYQFTGLENGTYKVEFETPSGYTPTQVGSGTDEGIDSNGTSTTGVIKDKDNDTIDSGFYKPTYNLGDYVWEDTNKNGVQDKDEKGISGVTVTLKDENDKVLKTVTTDENGKYQFTDLNNGTYKVEFETPSGYTPTSVTSGNDTEKDSNGLTTTGVIKDADNMTLDSGFYKTPKYSLGDYVWYDSNKDGKQDSTEKGIKDVKVTLLNEKGEVIGTTKTDENGKYCFDNLDSGKYKVIFEKPAGLTQTVTNTTEDDKDADGGEVDVTITDHDDFTLDNGYFEEDTSDSDSDSDSDSDSDSDSDSDSDSDSDSDSDSDSDSDSDSDSDSDSDSDSDSDSDSDSDSDSDSDSDSDSDSDSDSDSDSDSDSDSDSDSDSDSDSDSDSDSDSDSDSDSDSDSDSDSDSDSDSDSDSDSDSDSDSDSDSDSDSDSDSDSDSDSDSDSDSDSDSDSDAGKHTPVKPMSTTKDHHNKAKALPETGSENNGSNNATLFGGLFAALGSLLLFGRRKKQNK.

The first 35 residues, Met1–Ile35, serve as a signal peptide directing secretion. A YSIRK-G/S signaling motif motif is present at residues Phe23–Ser34. The tract at residues Leu36–Glu568 is ligand binding A region. Residues Glu54 to Ser185 are disordered. Composition is skewed to polar residues over residues Glu62–Gln71 and Glu94–Asn108. Basic and acidic residues predominate over residues Lys130–Asn145. Composition is skewed to polar residues over residues Thr146–Ala155 and Asn163–Asn173. Residues Glu174–Thr183 show a composition bias toward basic and acidic residues. CNA-B domains are found at residues Val569–Pro680, Lys681–Pro791, Lys792–Pro901, Thr902–Pro1012, and Lys1013–Thr1123. Disordered regions lie at residues Phe856 to Thr883, Tyr972 to Thr992, and Ala1081 to Ala1325. 2 stretches are compositionally biased toward polar residues: residues Ser860–Ser869 and Tyr972–Asn981. 2 stretches are compositionally biased toward acidic residues: residues Thr1091–Glu1101 and Tyr1118–Ser1288. Residues Leu1312–Gly1316 carry the LPXTG sorting signal motif. Thr1315 bears the Pentaglycyl murein peptidoglycan amidated threonine mark. The propeptide at Gly1316–Lys1349 is removed by sortase.

Belongs to the serine-aspartate repeat-containing protein (SDr) family. In terms of assembly, interacts with host DSG1; this interaction increases S.aureus adherence to keratinocytes.

It localises to the secreted. It is found in the cell wall. Functionally, cell surface-associated calcium-binding protein which plays an important role in adhesion and pathogenesis. Mediates interactions with components of the extracellular matrix such as host DSG1 to promote bacterial adhesion to host cells. Contributes to the resistance to killing by innate immune components such as neutrophils present in blood and thus attenuates bacterial clearance. This is Serine-aspartate repeat-containing protein D (sdrD) from Staphylococcus aureus (strain NCTC 8325 / PS 47).